A 3753-amino-acid chain; its full sequence is Intermembrane lipid transfer protein VPS13C (3753 aa).

Positions 3 to 116 constitute a Chorein N-terminal domain; that stretch reads LESVVADLLN…LQDVKQKELS (114 aa). Ser-132 bears the Phosphoserine mark. The segment covering 150 to 164 has biased composition (basic residues); the sequence is GRKRKKHKKHFKKPF. The tract at residues 150–176 is disordered; sequence GRKRKKHKKHFKKPFKGLDRSKDKPKE. The segment covering 165–176 has biased composition (basic and acidic residues); the sequence is KGLDRSKDKPKE. The residue at position 614 (Thr-614) is a Phosphothreonine. Ser-619 is modified (phosphoserine). Thr-624 is modified (phosphothreonine). Phosphoserine occurs at positions 737, 842, 872, and 874. Residues 877-883 carry the FFAT motif; that stretch reads EYFDAED. Ser-1979 and Ser-2473 each carry phosphoserine. Positions 2415–3309 are required for late endosome/lysosome localization; sequence DYSLKDRAPF…IQQDIDALNA (895 aa). The region spanning 2766–3016 is the SHR-BD domain; sequence LSVFSPYWLI…RLFAWADPTG (251 aa). The tract at residues 3310–3753 is required for lipid droplet localization; sequence ELMETSMTDM…VRLLRPQLPS (444 aa). Arg-3519 and Arg-3526 each carry omega-N-methylarginine. N6-acetyllysine is present on Lys-3538. Phosphoserine is present on Ser-3641.

This sequence belongs to the VPS13 family. In terms of tissue distribution, widely expressed.

It localises to the mitochondrion outer membrane. Its subcellular location is the lipid droplet. The protein localises to the endoplasmic reticulum membrane. The protein resides in the lysosome membrane. It is found in the late endosome membrane. In terms of biological role, mediates the transfer of lipids between membranes at organelle contact sites. Necessary for proper mitochondrial function and maintenance of mitochondrial transmembrane potential. Involved in the regulation of PINK1/PRKN-mediated mitophagy in response to mitochondrial depolarization. The polypeptide is Intermembrane lipid transfer protein VPS13C (Homo sapiens (Human)).